Reading from the N-terminus, the 491-residue chain is Homeobox protein unplugged (491 aa).

Disordered stretches follow at residues 1–23 (MERP…TKTT), 46–69 (SASA…QEQE), 124–146 (AGKE…PLPH), and 227–329 (FSPA…RRTA). A compositionally biased stretch (polar residues) spans 254–264 (GDSSSDISLTL). Over residues 305-316 (GLGGKDSQGNGS) the composition is skewed to gly residues. A DNA-binding region (homeobox) is located at residues 323 to 382 (SRRRRTAFTSEQLLELEREFHAKKYLSLTERSQIATSLKLSEVQVKIWFQNRRAKWKRVK).

It is found in the nucleus. Its function is as follows. Plays a regulatory role in neural branching of the tracheae: segment-specific aspects of these neural branching patterns appear to be generated by homeotic regulation of expression. The chain is Homeobox protein unplugged from Drosophila pseudoobscura pseudoobscura (Fruit fly).